Reading from the N-terminus, the 170-residue chain is Lipoprotein signal peptidase (170 aa).

3 consecutive transmembrane segments (helical) span residues 12 to 32, 67 to 87, and 94 to 113; these read WYWV…WVLS, WQRW…SVWL, and MWRL…GNLI. Residues aspartate 123 and aspartate 141 contribute to the active site. The chain crosses the membrane as a helical span at residues 139-159; sequence IADSAICVGAGLIILDSFVAG.

This sequence belongs to the peptidase A8 family.

It localises to the cell inner membrane. It catalyses the reaction Release of signal peptides from bacterial membrane prolipoproteins. Hydrolyzes -Xaa-Yaa-Zaa-|-(S,diacylglyceryl)Cys-, in which Xaa is hydrophobic (preferably Leu), and Yaa (Ala or Ser) and Zaa (Gly or Ala) have small, neutral side chains.. It functions in the pathway protein modification; lipoprotein biosynthesis (signal peptide cleavage). Its function is as follows. This protein specifically catalyzes the removal of signal peptides from prolipoproteins. The sequence is that of Lipoprotein signal peptidase from Shewanella pealeana (strain ATCC 700345 / ANG-SQ1).